A 173-amino-acid polypeptide reads, in one-letter code: Archaemetzincin (173 aa).

A Zn(2+)-binding site is contributed by His130. Catalysis depends on Glu131, which acts as the Proton acceptor. Zn(2+) is bound by residues His134, His140, Cys141, Cys146, Cys165, and Cys168.

This sequence belongs to the peptidase M54 family. As to quaternary structure, monomer. The cofactor is Zn(2+).

Probable zinc metalloprotease whose natural substrate is unknown. The polypeptide is Archaemetzincin (Halobacterium salinarum (strain ATCC 29341 / DSM 671 / R1)).